The primary structure comprises 376 residues: Glucose-1-phosphate adenylyltransferase (376 aa).

Alpha-D-glucose 1-phosphate-binding positions include tyrosine 101, glycine 166, 181–182 (EK), and serine 192.

This sequence belongs to the bacterial/plant glucose-1-phosphate adenylyltransferase family. In terms of assembly, homotetramer.

It catalyses the reaction alpha-D-glucose 1-phosphate + ATP + H(+) = ADP-alpha-D-glucose + diphosphate. It functions in the pathway glycan biosynthesis; glycogen biosynthesis. In terms of biological role, involved in the biosynthesis of ADP-glucose, a building block required for the elongation reactions to produce glycogen. Catalyzes the reaction between ATP and alpha-D-glucose 1-phosphate (G1P) to produce pyrophosphate and ADP-Glc. The chain is Glucose-1-phosphate adenylyltransferase from Bacillus mycoides (strain KBAB4) (Bacillus weihenstephanensis).